The chain runs to 216 residues: uncharacterized protein (216 aa).

The next 4 membrane-spanning stretches (helical) occupy residues 5–27, 98–120, 125–147, and 185–207; these read ISLI…IAFS, FLSF…VFLL, VLIW…TFTN, and GTLF…GILG.

The protein localises to the cell membrane. This is an uncharacterized protein from Aquifex aeolicus (strain VF5).